The following is an 80-amino-acid chain: Large ribosomal subunit protein uL29 (80 aa).

The protein belongs to the universal ribosomal protein uL29 family.

This chain is Large ribosomal subunit protein uL29, found in Mycobacterium marinum (strain ATCC BAA-535 / M).